Reading from the N-terminus, the 522-residue chain is Proactivator polypeptide-like 1 (522 aa).

Residues 1–17 (MLCALILWSGLLGAARA) form the signal peptide. Residues 18–59 (SPISVPRECAKGSEVWCQDLQAAAKCRAVRHCQSAVWNKPTV) constitute a propeptide that is removed on maturation. The Saposin A-type 1 domain maps to 19–59 (PISVPRECAKGSEVWCQDLQAAAKCRAVRHCQSAVWNKPTV). Saposin B-type domains lie at 60–144 (KSLP…EPLQ), 183–261 (EGAV…ERES), 291–371 (LGLT…GSKR), and 393–474 (QGSF…HGPK). Cystine bridges form between Cys64/Cys140, Cys67/Cys134, and Cys95/Cys107. Residues 146 to 183 (HLAETTSERPLTQEDANEVMAPFLSNGALSFHPSQMPE) constitute a propeptide that is removed on maturation. Disulfide bonds link Cys187–Cys257, Cys190–Cys251, and Cys216–Cys227. Asn204 is a glycosylation site (N-linked (GlcNAc...) asparagine). A propeptide spanning residues 261–290 (SAHWLTRVAAVDGVPSLEMEMPRTNELQMQ) is cleaved from the precursor. Disulfide bonds link Cys295–Cys367, Cys298–Cys361, and Cys326–Cys337. A glycan (N-linked (GlcNAc...) (high mannose) asparagine) is linked at Asn312. Residues 371-392 (RRARSISRAVATTPSLPVDEEN) constitute a propeptide that is removed on maturation. Disulfide bonds link Cys397-Cys470, Cys400-Cys464, and Cys428-Cys439. The propeptide occupies 475–522 (TPLLGTDQCVMGPSFWCKSPEAAEMCNALEHCQRLVWKKPVSKINEQP). Residues 476–516 (PLLGTDQCVMGPSFWCKSPEAAEMCNALEHCQRLVWKKPVS) form the Saposin A-type 2 domain.

The protein localises to the secreted. Its function is as follows. May activate the lysosomal degradation of sphingolipids. The polypeptide is Proactivator polypeptide-like 1 (Psapl1) (Mus musculus (Mouse)).